Consider the following 592-residue polypeptide: MTCWLCVLSLPLLLLPAAPPPAGGCPARCECTVQTRAVACTRRRLTAVPDGIPAETRLLELSRNRIRCLNPGDLAALPALEELDLSENAIAHVEPGAFANLPRLRVLRLRGNQLKLIPPGVFTRLDNLTLLDLSENKLVILLDYTFQDLHSLRRLEVGDNDLVFVSRRAFAGLLALEELTLERCNLTALSGESLGHLRSLGALRLRHLAIASLEDQNFRRLPGLLHLEIDNWPLLEEVAAGSLRGLNLTSLSVTHTNITAVPAAALRHQAHLTCLNLSHNPISTVPRGSFRDLVRLRELHLAGALLAVVEPQAFLGLRQIRLLNLSNNLLSTLEESTFHSVNTLETLRVDGNPLACDCRLLWIVQRRKTLNFDGRLPACATPAEVRGDALRNLPDSVLFEYFVCRKPKIRERRLQRVTATAGEDVRFLCRAEGEPAPTVAWVTPQHRPVTATSAGRARVLPGGTLEIQDARPQDSGTYTCVASNAGGNDTYFATLTVRPEPAANRTPGEAHNETLAALRAPLDLTTILVSTAMGCITFLGVVLFCFVLLFVWSRGRGQHKNNFSVEYSFRKVDGPAAAAGQGGARKFNMKMI.

A signal peptide spans methionine 1–glycine 24. The LRRNT domain maps to cysteine 25–alanine 54. The Extracellular segment spans residues cysteine 25–threonine 531. LRR repeat units follow at residues glutamate 55 to alanine 76, alanine 79 to asparagine 100, arginine 103 to arginine 124, asparagine 127 to aspartate 148, serine 151 to glycine 172, alanine 175 to histidine 196, histidine 207 to glutamate 228, asparagine 247 to histidine 268, histidine 271 to aspartate 292, arginine 295 to glycine 316, and glutamine 319 to serine 340. A glycan (N-linked (GlcNAc...) asparagine) is linked at asparagine 127. The N-linked (GlcNAc...) asparagine glycan is linked to asparagine 185. 3 N-linked (GlcNAc...) asparagine glycosylation sites follow: asparagine 247, asparagine 257, and asparagine 276. An N-linked (GlcNAc...) asparagine glycan is attached at asparagine 324. The LRRCT domain occupies asparagine 352–lysine 406. In terms of domain architecture, Ig-like C2-type spans proline 407–threonine 496. A disulfide bond links cysteine 429 and cysteine 480. N-linked (GlcNAc...) asparagine glycans are attached at residues asparagine 488 and asparagine 512. Residues alanine 532–tryptophan 552 form a helical membrane-spanning segment. At serine 553–isoleucine 592 the chain is on the cytoplasmic side.

It is found in the membrane. This Homo sapiens (Human) protein is Leucine-rich repeat and immunoglobulin-like domain-containing nogo receptor-interacting protein 3 (LINGO3).